A 152-amino-acid polypeptide reads, in one-letter code: Calcium-binding protein SPEC 1A (152 aa).

EF-hand domains are found at residues 10–45 (EEVT…TGKS), 46–81 (YTDK…QMVK), 84–119 (WKEE…SKPP), and 120–152 (MKRK…IKSC). Residues Asp-23, Asp-25, Ser-27, Ser-29, Glu-34, Asp-59, Asp-61, Ser-63, Thr-65, Glu-70, Asp-97, Asp-99, Asn-101, Ser-103, Glu-108, Asp-133, Asn-135, Asp-137, Lys-139, and Glu-144 each coordinate Ca(2+). The tract at residues 95-121 (DMDKDGNGSLSPQELREALSASKPPMK) is disordered.

As to expression, found in cell lineages giving rise to the aboral ectoderm, a squamous epithelium covering the surface of the late stage embryo and larva.

Calcium-binding protein involved in larval development and metamorphosis. Likely to function as calcium buffers mediating the transport of calcium from the sea water to the blastocoel where calcium is required for skeleton formation. This is Calcium-binding protein SPEC 1A (SPEC1) from Strongylocentrotus purpuratus (Purple sea urchin).